Consider the following 775-residue polypeptide: 5-methyltetrahydropteroyltriglutamate--homocysteine methyltransferase (775 aa).

5-methyltetrahydropteroyltri-L-glutamate contacts are provided by residues 15-18 and lysine 118; that span reads RELK. L-homocysteine contacts are provided by residues 448–450 and glutamate 501; that span reads IGS. Residues 448-450 and glutamate 501 contribute to the L-methionine site; that span reads IGS. 5-methyltetrahydropteroyltri-L-glutamate-binding positions include 532-533 and tryptophan 578; that span reads RC. Residue aspartate 616 participates in L-homocysteine binding. Position 616 (aspartate 616) interacts with L-methionine. Residue glutamate 622 participates in 5-methyltetrahydropteroyltri-L-glutamate binding. Histidine 658, cysteine 660, and glutamate 682 together coordinate Zn(2+). Histidine 711 serves as the catalytic Proton donor. A Zn(2+)-binding site is contributed by cysteine 743.

It belongs to the vitamin-B12 independent methionine synthase family. The cofactor is Zn(2+).

It carries out the reaction 5-methyltetrahydropteroyltri-L-glutamate + L-homocysteine = tetrahydropteroyltri-L-glutamate + L-methionine. It participates in amino-acid biosynthesis; L-methionine biosynthesis via de novo pathway; L-methionine from L-homocysteine (MetE route): step 1/1. Its function is as follows. Catalyzes the transfer of a methyl group from 5-methyltetrahydrofolate to homocysteine resulting in methionine formation. This chain is 5-methyltetrahydropteroyltriglutamate--homocysteine methyltransferase, found in Cytophaga hutchinsonii (strain ATCC 33406 / DSM 1761 / CIP 103989 / NBRC 15051 / NCIMB 9469 / D465).